The chain runs to 237 residues: Phosphoribosylaminoimidazole-succinocarboxamide synthase (237 aa).

Belongs to the SAICAR synthetase family.

It carries out the reaction 5-amino-1-(5-phospho-D-ribosyl)imidazole-4-carboxylate + L-aspartate + ATP = (2S)-2-[5-amino-1-(5-phospho-beta-D-ribosyl)imidazole-4-carboxamido]succinate + ADP + phosphate + 2 H(+). The protein operates within purine metabolism; IMP biosynthesis via de novo pathway; 5-amino-1-(5-phospho-D-ribosyl)imidazole-4-carboxamide from 5-amino-1-(5-phospho-D-ribosyl)imidazole-4-carboxylate: step 1/2. The protein is Phosphoribosylaminoimidazole-succinocarboxamide synthase of Enterococcus faecalis (strain ATCC 700802 / V583).